The chain runs to 142 residues: Ninjurin-2 (142 aa).

Positions 1 to 21 (MESARENIDLQPGSSDPRSQP) are disordered. Residues 1-60 (MESARENIDLQPGSSDPRSQPINLNHYATKKSVAESMLDVALFMSNAMRLKAVLEQGPSS) are Extracellular-facing. The segment covering 12-21 (PGSSDPRSQP) has biased composition (polar residues). Residues 25–37 (NHYATKKSVAESM) are helix alpha1. The segment at 38–57 (LDVALFMSNAMRLKAVLEQG) is helix alpha2. A helical membrane pass occupies residues 61–92 (HYYTTLVTLISLSLLLQVVIGVLLVVIARLNL). The Cytoplasmic portion of the chain corresponds to 93–96 (NEVE). A helical transmembrane segment spans residues 97-126 (KQWRLNQLNNAATILVFFTVVINVFITAFG). Glutamine 103 provides a ligand contact to cholesterol. The Extracellular segment spans residues 127 to 142 (AHKTGFLAARASRNPL).

It belongs to the ninjurin family. As to quaternary structure, homooligomer; in response to stimuli, homooligomerizes into filaments. In contrast to NINJ1, the filament is curved toward the intracellular space, preventing its circularization on a relatively flat membrane to mediate plasma membrane rupture: curvature is caused by cholesterol-binding at the cytoplasmic leaflet. Widely expressed. In adult, higher expression in the bone marrow and peripheral blood lymphocytes, medium in the lung, lymph node, thyroid, uterus, thymus, spleen, prostate and skeletal muscle, lower in the liver, placenta, brain, heart and kidney. In embryo, higher expression in the thymus, heart and liver, lower in the spleen, lung, brain and kidney.

It localises to the cell membrane. Its role in unclear. In contrast to NINJ1 paralog, does not mediate plasma membrane rupture (cytolysis) downstream of necroptotic and pyroptotic programmed cell death. While it is able to oligomerize and form filaments, filaments are curved toward the intracellular space, preventing circularization to mediate plasma membrane rupture. May act as a homophilic transmembrane adhesion molecule involved in nerve regeneration. Promotes axonal growth. This is Ninjurin-2 from Homo sapiens (Human).